A 184-amino-acid polypeptide reads, in one-letter code: ATP synthase subunit b, chloroplastic (184 aa).

The helical transmembrane segment at 27 to 49 threads the bilayer; the sequence is LATNPINLSVVLGVLIFFGKGVL.

This sequence belongs to the ATPase B chain family. F-type ATPases have 2 components, F(1) - the catalytic core - and F(0) - the membrane proton channel. F(1) has five subunits: alpha(3), beta(3), gamma(1), delta(1), epsilon(1). F(0) has four main subunits: a(1), b(1), b'(1) and c(10-14). The alpha and beta chains form an alternating ring which encloses part of the gamma chain. F(1) is attached to F(0) by a central stalk formed by the gamma and epsilon chains, while a peripheral stalk is formed by the delta, b and b' chains.

The protein resides in the plastid. Its subcellular location is the chloroplast thylakoid membrane. Its function is as follows. F(1)F(0) ATP synthase produces ATP from ADP in the presence of a proton or sodium gradient. F-type ATPases consist of two structural domains, F(1) containing the extramembraneous catalytic core and F(0) containing the membrane proton channel, linked together by a central stalk and a peripheral stalk. During catalysis, ATP synthesis in the catalytic domain of F(1) is coupled via a rotary mechanism of the central stalk subunits to proton translocation. Component of the F(0) channel, it forms part of the peripheral stalk, linking F(1) to F(0). In Piper cenocladum (Ant piper), this protein is ATP synthase subunit b, chloroplastic.